A 382-amino-acid chain; its full sequence is Alkanesulfonate monooxygenase (382 aa).

The protein belongs to the SsuD family.

The enzyme catalyses an alkanesulfonate + FMNH2 + O2 = an aldehyde + FMN + sulfite + H2O + 2 H(+). Its function is as follows. Catalyzes the desulfonation of aliphatic sulfonates. The protein is Alkanesulfonate monooxygenase of Pseudomonas putida (strain ATCC 700007 / DSM 6899 / JCM 31910 / BCRC 17059 / LMG 24140 / F1).